A 134-amino-acid chain; its full sequence is FK506-binding protein 2 (134 aa).

Residues 1–19 (MRILLLSALFLSLTTLVLS) form the signal peptide. The 89-residue stretch at 39–127 (GDTVHMHYRG…IFETELVQIE (89 aa)) folds into the PPIase FKBP-type domain. The short motif at 131–134 (NDEL) is the Prevents secretion from ER element.

Belongs to the FKBP-type PPIase family. FKBP2 subfamily.

Its subcellular location is the endoplasmic reticulum. It carries out the reaction [protein]-peptidylproline (omega=180) = [protein]-peptidylproline (omega=0). Inhibited by both FK506 and rapamycin. Functionally, PPIases accelerate the folding of proteins. It catalyzes the cis-trans isomerization of proline imidic peptide bonds in oligopeptides. The sequence is that of FK506-binding protein 2 (fpr2) from Aspergillus fumigatus (strain ATCC MYA-4609 / CBS 101355 / FGSC A1100 / Af293) (Neosartorya fumigata).